The following is a 275-amino-acid chain: MPLMKFKPTSPGRRSAVRVVTPDLHKGAPHAALLDSQSKSGGRNHHGRITVRHVGGGHKQHYRIIDFKRNKEGIPARVERIEYDPNRTAHIALLCYVDGERRYIIAPKGLKAGDQVIAGANAPIKTGNTLPLRNIPVGTTVHGIELKPGKGAQIARAAGAAVQLVAREGIYATLRLRSGEMRKVPVECRATIGEVGNDEHNLEKLGKAGAKRWRGVRPTVRGAAMNPVDHPHGGGEAKAGQGNPHPVTPWGVPTKGYKTRKNKRTQQFIVRDRRG.

Residues 224–275 (AMNPVDHPHGGGEAKAGQGNPHPVTPWGVPTKGYKTRKNKRTQQFIVRDRRG) form a disordered region.

Belongs to the universal ribosomal protein uL2 family. In terms of assembly, part of the 50S ribosomal subunit. Forms a bridge to the 30S subunit in the 70S ribosome.

One of the primary rRNA binding proteins. Required for association of the 30S and 50S subunits to form the 70S ribosome, for tRNA binding and peptide bond formation. It has been suggested to have peptidyltransferase activity; this is somewhat controversial. Makes several contacts with the 16S rRNA in the 70S ribosome. The polypeptide is Large ribosomal subunit protein uL2 (Xanthomonas axonopodis pv. citri (strain 306)).